Here is a 196-residue protein sequence, read N- to C-terminus: Gastrula zinc finger protein XlCGF8.2DB (196 aa).

C2H2-type zinc fingers lie at residues Phe6–His28, Phe34–His56, Phe62–His84, Phe90–His112, Phe118–His140, Phe146–His168, and Phe174–His196.

The protein belongs to the krueppel C2H2-type zinc-finger protein family.

The protein resides in the nucleus. In terms of biological role, may be involved in transcriptional regulation. This Xenopus laevis (African clawed frog) protein is Gastrula zinc finger protein XlCGF8.2DB.